The following is a 949-amino-acid chain: MQKLLSLPSNLVQSFHELERVNRTDWFCTSDPVGKKLGSGGGTSWLLEECYNEYSDGATFGEWLEKEKRILLHAGGQSRRLPGYAPSGKILTPVPVFRWERGQHLGQNLLSLQLPLYEKIMSLAPDKLHTLIASGDVYIRSEKPLQSIPEADVVCYGLWVDPSLATHHGVFASDRKHPEQLDFMLQKPSLAELESLSKTHLFLMDIGIWLLSDRAVEILMKRSHKESSEELKYYDLYSDFGLALGTHPRIEDEEVNTLSVAILPLPGGEFYHYGTSKELISSTLSVQNKVYDQRRIMHRKVKPNPAMFVQNAVVRIPLCAENADLWIENSHIGPKWKIASRHIITGVPENDWSLAVPAGVCVDVVPMGDKGFVARPYGLDDVFKGDLRDSKTTLTGIPFGEWMSKRGLSYTDLKGRTDDLQAVSVFPMVNSVEELGLVLRWMLSEPELEEGKNIWLRSEHFSADEISAGANLKRLYAQREEFRKGNWKALAVNHEKSVFYQLDLADAAEDFVRLGLDMPELLPEDALQMSRIHNRMLRARILKLDGKDYRPEEQAAFDLLRDGLLDGISNRKSTPKLDVYSDQIVWGRSPVRIDMAGGWTDTPPYSLYSGGNVVNLAIELNGQPPLQVYVKPCKDFHIVLRSIDMGAMEIVSTFDELQDYKKIGSPFSIPKAALSLAGFAPAFSAVSYASLEEQLKDFGAGIEVTLLAAIPAGSGLGTSSILASTVLGAINDFCGLAWDKNEICQRTLVLEQLLTTGGGWQDQYGGVLQGVKLLQTEAGFAQSPLVRWLPDHLFTHPEYKDCHLLYYTGITRTAKGILAEIVSSMFLNSSLHLNLLSEMKAHALDMNEAIQRGSFVEFGRLVGKTWEQNKALDSGTNPPAVEAIIDLIKDYTLGYKLPGAGGGGYLYMVAKDPQAAVRIRKILTENAPNPRARFVEMTLSDKGFQVSRS.

The tract at residues 25–191 (DWFCTSDPVG…DFMLQKPSLA (167 aa)) is fucose-1-phosphate guanylyltransferase. An L-fucokinase region spans residues 559 to 949 (LLRDGLLDGI…SDKGFQVSRS (391 aa)).

Belongs to the GHMP kinase family. As to quaternary structure, homotetramer. Requires Mn(2+) as cofactor. Mg(2+) serves as cofactor.

It carries out the reaction L-fucose + ATP = beta-L-fucose 1-phosphate + ADP + H(+). The catalysed reaction is beta-L-fucose 1-phosphate + GTP + H(+) = GDP-beta-L-fucose + diphosphate. Its function is as follows. Bifunctional enzyme involved in the salvage pathway of GDP-fucose synthesis. Catalyzes two successive reactions, the ATP-dependent phosphorylation of L-fucose to L-fucose 1-phosphate, and its guanylylation to GDP-L-fucose. GDP-fucose is an important fucose donor in the process of fucosylated oligosaccharides formation. This is L-fucokinase/L-fucose-1-P guanylyltransferase from Bacteroides fragilis.